We begin with the raw amino-acid sequence, 291 residues long: MTNKITERITGHTELIGLIATPIRHSLSPTMHNEAFAKLGLDYVYLAFEVGDKELKDVVQGFRAMNLRGWNVSMPNKTNIHKYLDKLSPAAELVGAVNTVVNDDGVLTGHITDGTGYMRALKEAGHDIIGKKMTICGAGGAATAICIQAALDGVKEISIFNRKDDFYANAEKTVEKINSKTDCKAQLFDIEDHEQLRKEIAESVIFTNATGVGMKPFEGETLLPSADMLRPELIVSDVVYKPTKTRLLEIAEEQGCQTLNGLGMMLWQGAKAFEIWTHKEMPVDYIKEILF.

Shikimate-binding positions include 26-28 (SLS) and S73. Catalysis depends on K77, which acts as the Proton acceptor. N98 and D113 together coordinate shikimate. NADP(+)-binding positions include 137 to 141 (GAGGA) and V238. Position 240 (Y240) interacts with shikimate. An NADP(+)-binding site is contributed by G261.

This sequence belongs to the shikimate dehydrogenase family. In terms of assembly, homodimer.

The enzyme catalyses shikimate + NADP(+) = 3-dehydroshikimate + NADPH + H(+). Its pathway is metabolic intermediate biosynthesis; chorismate biosynthesis; chorismate from D-erythrose 4-phosphate and phosphoenolpyruvate: step 4/7. Involved in the biosynthesis of the chorismate, which leads to the biosynthesis of aromatic amino acids. Catalyzes the reversible NADPH linked reduction of 3-dehydroshikimate (DHSA) to yield shikimate (SA). In Listeria monocytogenes serotype 4b (strain F2365), this protein is Shikimate dehydrogenase (NADP(+)).